Here is a 321-residue protein sequence, read N- to C-terminus: tRNA uridine(34) hydroxylase (321 aa).

The 99-residue stretch at Asp135–Ser233 folds into the Rhodanese domain. Residue Cys193 is the Cysteine persulfide intermediate of the active site. The disordered stretch occupies residues Arg301–Leu321.

It belongs to the TrhO family.

It catalyses the reaction uridine(34) in tRNA + AH2 + O2 = 5-hydroxyuridine(34) in tRNA + A + H2O. Catalyzes oxygen-dependent 5-hydroxyuridine (ho5U) modification at position 34 in tRNAs. The polypeptide is tRNA uridine(34) hydroxylase (Parasynechococcus marenigrum (strain WH8102)).